Here is a 248-residue protein sequence, read N- to C-terminus: Probable transcriptional regulatory protein FTF0655 (248 aa).

It belongs to the TACO1 family.

The protein localises to the cytoplasm. The sequence is that of Probable transcriptional regulatory protein FTF0655 from Francisella tularensis subsp. tularensis (strain FSC 198).